The following is a 156-amino-acid chain: Keratin, high-sulfur matrix protein, B2B (156 aa).

N-acetylalanine is present on A1. Repeats lie at residues 26-35, 36-45, 46-55, and 56-65; these read PTCSQTSCCQ, PTSIQTSCCQ, PISIQTSCCQ, and PTCLQTSGCE.

Functionally, the keratin products of mammalian epidermal derivatives such as wool and hair consist of microfibrils embedded in a rigid matrix of other proteins. The matrix proteins include the high-sulfur and high-tyrosine keratins, having molecular weights of 6-20 kDa, whereas the microfibrils contain the larger, low-sulfur keratins (40-56 kDa). The sequence is that of Keratin, high-sulfur matrix protein, B2B from Ovis aries (Sheep).